A 95-amino-acid chain; its full sequence is Stationary phase-expressed protein 1 (95 aa).

The helical transmembrane segment at 20–38 threads the bilayer; that stretch reads FRYIMLGLVGAAVVPTAYM.

The protein resides in the mitochondrion membrane. In Saccharomyces cerevisiae (strain RM11-1a) (Baker's yeast), this protein is Stationary phase-expressed protein 1 (SPG1).